A 158-amino-acid polypeptide reads, in one-letter code: 2-C-methyl-D-erythritol 2,4-cyclodiphosphate synthase (158 aa).

The a divalent metal cation site is built by aspartate 9 and histidine 11. Residues 9–11 (DVH) and 35–36 (HS) each bind 4-CDP-2-C-methyl-D-erythritol 2-phosphate. A divalent metal cation is bound at residue histidine 43. 4-CDP-2-C-methyl-D-erythritol 2-phosphate-binding positions include 57-59 (DIG), 62-66 (FPDTD), 133-136 (TTTE), phenylalanine 140, and arginine 143.

The protein belongs to the IspF family. Homotrimer. It depends on a divalent metal cation as a cofactor.

It carries out the reaction 4-CDP-2-C-methyl-D-erythritol 2-phosphate = 2-C-methyl-D-erythritol 2,4-cyclic diphosphate + CMP. It functions in the pathway isoprenoid biosynthesis; isopentenyl diphosphate biosynthesis via DXP pathway; isopentenyl diphosphate from 1-deoxy-D-xylulose 5-phosphate: step 4/6. In terms of biological role, involved in the biosynthesis of isopentenyl diphosphate (IPP) and dimethylallyl diphosphate (DMAPP), two major building blocks of isoprenoid compounds. Catalyzes the conversion of 4-diphosphocytidyl-2-C-methyl-D-erythritol 2-phosphate (CDP-ME2P) to 2-C-methyl-D-erythritol 2,4-cyclodiphosphate (ME-CPP) with a corresponding release of cytidine 5-monophosphate (CMP). The protein is 2-C-methyl-D-erythritol 2,4-cyclodiphosphate synthase of Actinobacillus pleuropneumoniae serotype 7 (strain AP76).